The chain runs to 227 residues: UPF0758 protein PG_0894 (227 aa).

Positions 104–227 (SITDSRMAYR…YFSFADEGLL (124 aa)) constitute an MPN domain. The Zn(2+) site is built by His175, His177, and Asp188. The JAMM motif signature appears at 175 to 188 (HNHPSGTVRPSEQD).

The protein belongs to the UPF0758 family.

The protein is UPF0758 protein PG_0894 of Porphyromonas gingivalis (strain ATCC BAA-308 / W83).